Consider the following 456-residue polypeptide: MGLEWSSPGERQPLLYPGGPRAPRVFGRRWLVLLLFSLLAFLQGLVWNSWGPIQNSARTAYNFSGLDIALLVLWGPIGFLPCFLFMWLMDNRGLRVTVLLTALLMVLGAGLRCVPVQDLAVRRKLIHGGQLLNGFAGPTVMNAAPFLSTTWFSPDERATATAIASMLSYLGGACAFLVGPLVVPAPNSTSGLLLYSGSVGAIRDRIEAVMYAEFGIIFVVFAAILAYFPSRPPVPPSVAAASRRLSYRTSILRLLSNVRFLLIVLAYAIPLGFYAGWSGVLDLILTPVHVTQVDAGWVGFWSIVGGCVVGIAVGRFADSIRGVLKPILLLLFSGAALSSTWFTLTFLSNVTHLPLTTATLYTSCILIGVFLSGTVPIFFEMFVETVYPIPEGITCGVVTFLSNLFMGVLLLFLTLYQTNLSWLNWCLTGSCFLSLLFIACFRESYDRLYLDVFVSV.

The Cytoplasmic portion of the chain corresponds to 1-29 (MGLEWSSPGERQPLLYPGGPRAPRVFGRR). Residues 14–15 (LL) carry the Di-leucine motif; mediates lysosomal localization motif. The helical transmembrane segment at 30-50 (WLVLLLFSLLAFLQGLVWNSW) threads the bilayer. Topologically, residues 51-67 (GPIQNSARTAYNFSGLD) are lumenal. N-linked (GlcNAc...) asparagine glycosylation is present at asparagine 62. The helical transmembrane segment at 68 to 88 (IALLVLWGPIGFLPCFLFMWL) threads the bilayer. Topologically, residues 89–95 (MDNRGLR) are cytoplasmic. A helical transmembrane segment spans residues 96-116 (VTVLLTALLMVLGAGLRCVPV). Topologically, residues 117 to 131 (QDLAVRRKLIHGGQL) are lumenal. The chain crosses the membrane as a helical span at residues 132–152 (LNGFAGPTVMNAAPFLSTTWF). Topologically, residues 153 to 162 (SPDERATATA) are cytoplasmic. A helical transmembrane segment spans residues 163 to 183 (IASMLSYLGGACAFLVGPLVV). Over 184–207 (PAPNSTSGLLLYSGSVGAIRDRIE) the chain is Lumenal. A glycan (N-linked (GlcNAc...) asparagine) is linked at asparagine 187. Residues 208-228 (AVMYAEFGIIFVVFAAILAYF) form a helical membrane-spanning segment. The Cytoplasmic segment spans residues 229–259 (PSRPPVPPSVAAASRRLSYRTSILRLLSNVR). A helical transmembrane segment spans residues 260–280 (FLLIVLAYAIPLGFYAGWSGV). At 281-292 (LDLILTPVHVTQ) the chain is on the lumenal side. The chain crosses the membrane as a helical span at residues 293–313 (VDAGWVGFWSIVGGCVVGIAV). At 314–326 (GRFADSIRGVLKP) the chain is on the cytoplasmic side. Residues 327–347 (ILLLLFSGAALSSTWFTLTFL) form a helical membrane-spanning segment. Residues 348–362 (SNVTHLPLTTATLYT) lie on the Lumenal side of the membrane. An N-linked (GlcNAc...) asparagine glycan is attached at asparagine 349. Residues 363–383 (SCILIGVFLSGTVPIFFEMFV) traverse the membrane as a helical segment. Topologically, residues 384–392 (ETVYPIPEG) are cytoplasmic. Residues 393–413 (ITCGVVTFLSNLFMGVLLLFL) traverse the membrane as a helical segment. Topologically, residues 414 to 420 (TLYQTNL) are lumenal. N-linked (GlcNAc...) asparagine glycosylation is present at asparagine 419. A helical membrane pass occupies residues 421-441 (SWLNWCLTGSCFLSLLFIACF). The Cytoplasmic portion of the chain corresponds to 442 to 456 (RESYDRLYLDVFVSV).

This sequence belongs to the major facilitator superfamily.

Its subcellular location is the lysosome membrane. The enzyme catalyses pyridoxine(out) + n H(+)(out) = pyridoxine(in) + n H(+)(in). Its function is as follows. Mediates H(+)-dependent pyridoxine transport. This Xenopus tropicalis (Western clawed frog) protein is Solute carrier family 49 member 4 homolog (slc49a4).